The primary structure comprises 161 residues: Regulator of ribonuclease activity A (161 aa).

Belongs to the RraA family. As to quaternary structure, homotrimer. Binds to both RNA-binding sites in the C-terminal region of Rne and to RhlB.

It localises to the cytoplasm. Functionally, globally modulates RNA abundance by binding to RNase E (Rne) and regulating its endonucleolytic activity. Can modulate Rne action in a substrate-dependent manner by altering the composition of the degradosome. Modulates RNA-binding and helicase activities of the degradosome. This Shewanella sediminis (strain HAW-EB3) protein is Regulator of ribonuclease activity A.